Here is a 331-residue protein sequence, read N- to C-terminus: Fructose-1,6-bisphosphatase class 1 2 (331 aa).

Residues E80, D98, L100, and D101 each coordinate Mg(2+). Residues 101–104 and N189 contribute to the substrate site; that span reads DGSS. E261 provides a ligand contact to Mg(2+).

The protein belongs to the FBPase class 1 family. As to quaternary structure, homotetramer. Mg(2+) is required as a cofactor.

The protein localises to the cytoplasm. The enzyme catalyses beta-D-fructose 1,6-bisphosphate + H2O = beta-D-fructose 6-phosphate + phosphate. The protein operates within carbohydrate biosynthesis; Calvin cycle. This Cereibacter sphaeroides (strain ATCC 17029 / ATH 2.4.9) (Rhodobacter sphaeroides) protein is Fructose-1,6-bisphosphatase class 1 2.